The chain runs to 178 residues: ATP synthase subunit delta (178 aa).

It belongs to the ATPase delta chain family. F-type ATPases have 2 components, F(1) - the catalytic core - and F(0) - the membrane proton channel. F(1) has five subunits: alpha(3), beta(3), gamma(1), delta(1), epsilon(1). F(0) has three main subunits: a(1), b(2) and c(10-14). The alpha and beta chains form an alternating ring which encloses part of the gamma chain. F(1) is attached to F(0) by a central stalk formed by the gamma and epsilon chains, while a peripheral stalk is formed by the delta and b chains.

Its subcellular location is the cell membrane. In terms of biological role, f(1)F(0) ATP synthase produces ATP from ADP in the presence of a proton or sodium gradient. F-type ATPases consist of two structural domains, F(1) containing the extramembraneous catalytic core and F(0) containing the membrane proton channel, linked together by a central stalk and a peripheral stalk. During catalysis, ATP synthesis in the catalytic domain of F(1) is coupled via a rotary mechanism of the central stalk subunits to proton translocation. Functionally, this protein is part of the stalk that links CF(0) to CF(1). It either transmits conformational changes from CF(0) to CF(1) or is implicated in proton conduction. This chain is ATP synthase subunit delta, found in Streptococcus pneumoniae (strain CGSP14).